A 329-amino-acid polypeptide reads, in one-letter code: Biotin synthase (329 aa).

One can recognise a Radical SAM core domain in the interval 36–260; the sequence is GEIQLCTLLS…VAVARITMPK (225 aa). [4Fe-4S] cluster-binding residues include Cys-51, Cys-55, and Cys-58. [2Fe-2S] cluster contacts are provided by Cys-95, Cys-126, Cys-186, and Arg-264.

It belongs to the radical SAM superfamily. Biotin synthase family. Homodimer. It depends on [4Fe-4S] cluster as a cofactor. [2Fe-2S] cluster is required as a cofactor.

The catalysed reaction is (4R,5S)-dethiobiotin + (sulfur carrier)-SH + 2 reduced [2Fe-2S]-[ferredoxin] + 2 S-adenosyl-L-methionine = (sulfur carrier)-H + biotin + 2 5'-deoxyadenosine + 2 L-methionine + 2 oxidized [2Fe-2S]-[ferredoxin]. It participates in cofactor biosynthesis; biotin biosynthesis; biotin from 7,8-diaminononanoate: step 2/2. Its function is as follows. Catalyzes the conversion of dethiobiotin (DTB) to biotin by the insertion of a sulfur atom into dethiobiotin via a radical-based mechanism. The sequence is that of Biotin synthase from Sphingopyxis alaskensis (strain DSM 13593 / LMG 18877 / RB2256) (Sphingomonas alaskensis).